The primary structure comprises 551 residues: Cytochrome P450 monooxygenase abl5 (551 aa).

N-linked (GlcNAc...) asparagine glycosylation occurs at N24. A helical transmembrane segment spans residues 37 to 57 (VVLNTLTAIVVVWICYRAVIY). N-linked (GlcNAc...) asparagine glycans are attached at residues N174, N218, N283, N307, and N441. Heme is bound at residue C495.

It belongs to the cytochrome P450 family. Heme is required as a cofactor.

The protein localises to the membrane. Functionally, cytochrome P450 monooxygenase; part of the gene cluster that mediates the biosynthesis of abscisic acid (ABA), a phytohormone that acts antagonistically toward salicylic acid (SA), jasmonic acid (JA) and ethylene (ETH) signaling, to impede plant defense responses. The first step of the pathway catalyzes the reaction from farnesyl diphosphate to alpha-ionylideneethane performed by the alpha-ionylideneethane synthase abl3 via a three-step reaction mechanism involving 2 neutral intermediates, beta-farnesene and allofarnesene. The cytochrome P450 monooxygenase abl1 might then be involved in the conversion of alpha-ionylideneethane to alpha-ionylideneacetic acid. Alpha-ionylideneacetic acid is further converted to abscisic acid in 2 steps involving the cytochrome P450 monooxygenase abl2 and the short-chain dehydrogenase/reductase abl4, via the intermediates 1'-deoxy-ABA or 1',4'-trans-diol-ABA, depending on the order of action of these 2 enzymes. Abl2 is responsible for the hydroxylation of carbon atom C-1' and abl4 might be involved in the oxidation of the C-4' carbon atom. The cytochrome monooxygenase abl5 seems not essential for the biosynthesis of ABA and its function remains to be identified. This Leptosphaeria maculans (strain JN3 / isolate v23.1.3 / race Av1-4-5-6-7-8) (Blackleg fungus) protein is Cytochrome P450 monooxygenase abl5.